We begin with the raw amino-acid sequence, 941 residues long: Isoleucine--tRNA ligase (941 aa).

The 'HIGH' region signature appears at 59–69; the sequence is PYANGNIHIGH. Residue Glu-562 coordinates L-isoleucyl-5'-AMP. Residues 603 to 607 carry the 'KMSKS' region motif; the sequence is KMSKS. Residue Lys-606 coordinates ATP. Zn(2+) is bound by residues Cys-904, Cys-907, Cys-924, and Cys-927.

The protein belongs to the class-I aminoacyl-tRNA synthetase family. IleS type 1 subfamily. As to quaternary structure, monomer. Zn(2+) serves as cofactor.

The protein resides in the cytoplasm. It catalyses the reaction tRNA(Ile) + L-isoleucine + ATP = L-isoleucyl-tRNA(Ile) + AMP + diphosphate. Catalyzes the attachment of isoleucine to tRNA(Ile). As IleRS can inadvertently accommodate and process structurally similar amino acids such as valine, to avoid such errors it has two additional distinct tRNA(Ile)-dependent editing activities. One activity is designated as 'pretransfer' editing and involves the hydrolysis of activated Val-AMP. The other activity is designated 'posttransfer' editing and involves deacylation of mischarged Val-tRNA(Ile). This chain is Isoleucine--tRNA ligase, found in Haemophilus influenzae (strain 86-028NP).